A 76-amino-acid polypeptide reads, in one-letter code: Heat shock factor-binding protein 1 (76 aa).

Belongs to the HSBP1 family. Homohexamer. Associates with heptad repeats of HSF1 trimers and probably also HSF1 monomers, and with HSP70. Association with HSF1 trimers and HSP70 coincides with attenuation of heat shock response and the conversion of HSF1 trimer to monomer.

The protein resides in the nucleus. Its function is as follows. Negative regulator of the heat shock response. Negatively affects HSF1 DNA-binding activity. May have a role in the suppression of the activation of the stress response during the aging process. This chain is Heat shock factor-binding protein 1 (HSBP1), found in Bos taurus (Bovine).